A 380-amino-acid chain; its full sequence is Cystathionine gamma-synthase (380 aa).

K195 carries the post-translational modification N6-(pyridoxal phosphate)lysine.

It belongs to the trans-sulfuration enzymes family. As to quaternary structure, homotetramer. Pyridoxal 5'-phosphate is required as a cofactor.

Its subcellular location is the cytoplasm. It carries out the reaction O-succinyl-L-homoserine + L-cysteine = L,L-cystathionine + succinate + H(+). Its function is as follows. Catalyzes the formation of L-cystathionine from O-succinyl-L-homoserine (OSHS) and L-cysteine, via a gamma-replacement reaction. In the absence of thiol, catalyzes gamma-elimination to form 2-oxobutanoate, succinate and ammonia. The sequence is that of Cystathionine gamma-synthase (metB) from Helicobacter pylori (strain ATCC 700392 / 26695) (Campylobacter pylori).